We begin with the raw amino-acid sequence, 386 residues long: ATP phosphoribosyltransferase regulatory subunit (386 aa).

This sequence belongs to the class-II aminoacyl-tRNA synthetase family. HisZ subfamily. In terms of assembly, heteromultimer composed of HisG and HisZ subunits.

The protein resides in the cytoplasm. It functions in the pathway amino-acid biosynthesis; L-histidine biosynthesis; L-histidine from 5-phospho-alpha-D-ribose 1-diphosphate: step 1/9. Required for the first step of histidine biosynthesis. May allow the feedback regulation of ATP phosphoribosyltransferase activity by histidine. The protein is ATP phosphoribosyltransferase regulatory subunit of Variovorax paradoxus (strain S110).